A 200-amino-acid chain; its full sequence is GTP cyclohydrolase-2 (200 aa).

50–54 provides a ligand contact to GTP; the sequence is RVHSE. Positions 55, 66, and 68 each coordinate Zn(2+). GTP is bound by residues Gln-71, 93 to 95, and Thr-115; that span reads EGR. Asp-127 acts as the Proton acceptor in catalysis. The active-site Nucleophile is Arg-129. GTP-binding residues include Thr-150 and Lys-155.

The protein belongs to the GTP cyclohydrolase II family. It depends on Zn(2+) as a cofactor.

The enzyme catalyses GTP + 4 H2O = 2,5-diamino-6-hydroxy-4-(5-phosphoribosylamino)-pyrimidine + formate + 2 phosphate + 3 H(+). Its pathway is cofactor biosynthesis; riboflavin biosynthesis; 5-amino-6-(D-ribitylamino)uracil from GTP: step 1/4. Its function is as follows. Catalyzes the conversion of GTP to 2,5-diamino-6-ribosylamino-4(3H)-pyrimidinone 5'-phosphate (DARP), formate and pyrophosphate. This chain is GTP cyclohydrolase-2, found in Acinetobacter baumannii (strain SDF).